The following is a 66-amino-acid chain: Muscarinic toxin alpha (66 aa).

Cystine bridges form between Cys-3-Cys-24, Cys-17-Cys-42, Cys-46-Cys-58, and Cys-59-Cys-64.

This sequence belongs to the three-finger toxin family. Short-chain subfamily. Aminergic toxin sub-subfamily. As to expression, expressed by the venom gland.

It localises to the secreted. Selectively binds with high-affinity to the a2B-adrenoceptor subtype (ADRA2B). The toxin reversibly binds to ADRA2B, and its mode of inhibition is non-competitive. The toxin has also been described to bind with high affinity to all muscarinic receptor subtypes (Ki=23 nM (on CHRM1), Ki=44 nM (on CHRM2), Ki=3 nM (on CHRM3), Ki=5 nM (on CHRM4), and Ki=8 nM (on CHRM5)) but no other data support these affinity values. This is Muscarinic toxin alpha from Dendroaspis polylepis polylepis (Black mamba).